Reading from the N-terminus, the 449-residue chain is 3-phosphoshikimate 1-carboxyvinyltransferase (449 aa).

The disordered stretch occupies residues 1-23; it reads MSHSASPKPATARRSEALTGEIR. The 3-phosphoshikimate site is built by Lys28, Ser29, and Arg33. Lys28 contacts phosphoenolpyruvate. The phosphoenolpyruvate site is built by Gly100 and Arg128. 3-phosphoshikimate contacts are provided by Ser173, Gln175, Asp326, and Lys353. Position 175 (Gln175) interacts with phosphoenolpyruvate. The active-site Proton acceptor is Asp326. 2 residues coordinate phosphoenolpyruvate: Arg357 and Arg402.

The protein belongs to the EPSP synthase family. In terms of assembly, monomer.

It localises to the cytoplasm. The enzyme catalyses 3-phosphoshikimate + phosphoenolpyruvate = 5-O-(1-carboxyvinyl)-3-phosphoshikimate + phosphate. Its pathway is metabolic intermediate biosynthesis; chorismate biosynthesis; chorismate from D-erythrose 4-phosphate and phosphoenolpyruvate: step 6/7. Catalyzes the transfer of the enolpyruvyl moiety of phosphoenolpyruvate (PEP) to the 5-hydroxyl of shikimate-3-phosphate (S3P) to produce enolpyruvyl shikimate-3-phosphate and inorganic phosphate. The polypeptide is 3-phosphoshikimate 1-carboxyvinyltransferase (Pseudomonas sp. (strain PG2982)).